The sequence spans 413 residues: NADH-quinone oxidoreductase subunit D (413 aa).

This sequence belongs to the complex I 49 kDa subunit family. NDH-1 is composed of 14 different subunits. Subunits NuoB, C, D, E, F, and G constitute the peripheral sector of the complex.

Its subcellular location is the cell inner membrane. It catalyses the reaction a quinone + NADH + 5 H(+)(in) = a quinol + NAD(+) + 4 H(+)(out). Its function is as follows. NDH-1 shuttles electrons from NADH, via FMN and iron-sulfur (Fe-S) centers, to quinones in the respiratory chain. The immediate electron acceptor for the enzyme in this species is believed to be ubiquinone. Couples the redox reaction to proton translocation (for every two electrons transferred, four hydrogen ions are translocated across the cytoplasmic membrane), and thus conserves the redox energy in a proton gradient. The chain is NADH-quinone oxidoreductase subunit D from Rhodobacter capsulatus (Rhodopseudomonas capsulata).